A 317-amino-acid chain; its full sequence is Acetyl-coenzyme A carboxylase carboxyl transferase subunit alpha (317 aa).

Residues 39–293 (RLQKKSNDLT…KAVLEKQLHE (255 aa)) enclose the CoA carboxyltransferase C-terminal domain.

The protein belongs to the AccA family. Acetyl-CoA carboxylase is a heterohexamer composed of biotin carboxyl carrier protein (AccB), biotin carboxylase (AccC) and two subunits each of ACCase subunit alpha (AccA) and ACCase subunit beta (AccD).

Its subcellular location is the cytoplasm. It catalyses the reaction N(6)-carboxybiotinyl-L-lysyl-[protein] + acetyl-CoA = N(6)-biotinyl-L-lysyl-[protein] + malonyl-CoA. The protein operates within lipid metabolism; malonyl-CoA biosynthesis; malonyl-CoA from acetyl-CoA: step 1/1. In terms of biological role, component of the acetyl coenzyme A carboxylase (ACC) complex. First, biotin carboxylase catalyzes the carboxylation of biotin on its carrier protein (BCCP) and then the CO(2) group is transferred by the carboxyltransferase to acetyl-CoA to form malonyl-CoA. This chain is Acetyl-coenzyme A carboxylase carboxyl transferase subunit alpha, found in Neisseria gonorrhoeae (strain NCCP11945).